A 302-amino-acid polypeptide reads, in one-letter code: O-antigen biosynthesis glycosyltransferase WbnK (302 aa).

This sequence belongs to the glycosyltransferase 11 family.

It catalyses the reaction beta-D-Gal-(1-&gt;3)-alpha-D-GalNAc-(1-&gt;3)-alpha-D-GalNAc-di-trans,octa-cis-undecaprenyl diphosphate + GDP-beta-L-fucose = alpha-L-Fuc-(1-&gt;2)-beta-D-Gal-(1-&gt;3)-alpha-D-GalNAc-(1-&gt;3)-alpha-D-GalNAc-di-trans,octa-cis-undecaprenyl diphosphate + GDP + H(+). Its pathway is bacterial outer membrane biogenesis; LPS O-antigen biosynthesis. In terms of biological role, involved in the assembly of the O-repeating unit during O-antigen biosynthesis. This Escherichia coli protein is O-antigen biosynthesis glycosyltransferase WbnK.